The chain runs to 370 residues: MIAVLKTPLSNHIKANTKALFSSLPKTKNELEISLDDLAKQIISGYRLSREEAIILTQIAGEEDILLLCEAADRVRQACCGNVVDLCSIINVKSGGCSENCSFCSQSVHHPGEDSPIYGLKSTEEILDQAKAAEAAGAKRFCLVSQGRGVKYNSPKSTEFEQILGTVRQILAETNIKPCCALGELTPEQAQALAEAGVTRYNHNLEASEHFYPEIVSTHSWNDRVETVKNLKAAGIQACTGGIIGMGETWADRIDLALALRELEVESVPLNLLNSREGTPLGGLLKLDPYDALKAIAIFRLILPKQIIRYAGGREAVMGDLQALGLKAGINAMLIGHYLTTLGQPPEKDQAMLKSLGLQGGETPIATNGL.

Residues 79-314 (CCGNVVDLCS…KQIIRYAGGR (236 aa)) form the Radical SAM core domain. [4Fe-4S] cluster contacts are provided by Cys-97, Cys-101, and Cys-104. Positions 142, 179, 239, and 309 each coordinate [2Fe-2S] cluster.

Belongs to the radical SAM superfamily. Biotin synthase family. Homodimer. [4Fe-4S] cluster serves as cofactor. Requires [2Fe-2S] cluster as cofactor.

It carries out the reaction (4R,5S)-dethiobiotin + (sulfur carrier)-SH + 2 reduced [2Fe-2S]-[ferredoxin] + 2 S-adenosyl-L-methionine = (sulfur carrier)-H + biotin + 2 5'-deoxyadenosine + 2 L-methionine + 2 oxidized [2Fe-2S]-[ferredoxin]. Its pathway is cofactor biosynthesis; biotin biosynthesis; biotin from 7,8-diaminononanoate: step 2/2. Catalyzes the conversion of dethiobiotin (DTB) to biotin by the insertion of a sulfur atom into dethiobiotin via a radical-based mechanism. This chain is Biotin synthase, found in Trichodesmium erythraeum (strain IMS101).